We begin with the raw amino-acid sequence, 567 residues long: Glutamine--tRNA ligase (567 aa).

Residues 47–57 (PEPNGYLHIGH) carry the 'HIGH' region motif. Residues 48-50 (EPN) and 54-60 (HIGHAKS) contribute to the ATP site. L-glutamine is bound by residues Asp-80 and Tyr-225. ATP-binding positions include Thr-244 and 274–275 (RL). A 'KMSKS' region motif is present at residues 281–285 (ITSKR).

The protein belongs to the class-I aminoacyl-tRNA synthetase family. As to quaternary structure, monomer.

It localises to the cytoplasm. The enzyme catalyses tRNA(Gln) + L-glutamine + ATP = L-glutaminyl-tRNA(Gln) + AMP + diphosphate. The sequence is that of Glutamine--tRNA ligase from Pseudomonas putida (strain ATCC 47054 / DSM 6125 / CFBP 8728 / NCIMB 11950 / KT2440).